We begin with the raw amino-acid sequence, 344 residues long: Uroporphyrinogen decarboxylase (344 aa).

Substrate-binding positions include 26 to 30 (RQAGR), D76, Y151, S206, and H321.

Belongs to the uroporphyrinogen decarboxylase family. As to quaternary structure, homodimer.

The protein localises to the cytoplasm. It catalyses the reaction uroporphyrinogen III + 4 H(+) = coproporphyrinogen III + 4 CO2. The protein operates within porphyrin-containing compound metabolism; protoporphyrin-IX biosynthesis; coproporphyrinogen-III from 5-aminolevulinate: step 4/4. Its function is as follows. Catalyzes the decarboxylation of four acetate groups of uroporphyrinogen-III to yield coproporphyrinogen-III. The protein is Uroporphyrinogen decarboxylase of Sinorhizobium fredii (strain NBRC 101917 / NGR234).